Consider the following 358-residue polypeptide: UPF0324 membrane protein CT0845 (358 aa).

The next 10 membrane-spanning stretches (helical) occupy residues 36–53 (YFPG…ATFL), 57–76 (YGAP…RFLS), 83–105 (LVGI…GMRI), 115–134 (VKPV…FGLA), 146–168 (GVLT…AAVL), 178–200 (TIFT…PVVA), 244–261 (LLRV…SLIF), 276–295 (LLPP…SLGV), 307–325 (VSRW…KTSL), and 335–357 (PVSI…VVWM).

The protein belongs to the UPF0324 family.

The protein resides in the cell membrane. The sequence is that of UPF0324 membrane protein CT0845 from Chlorobaculum tepidum (strain ATCC 49652 / DSM 12025 / NBRC 103806 / TLS) (Chlorobium tepidum).